The following is a 797-amino-acid chain: Outer membrane protein assembly factor BamA (797 aa).

Positions 1 to 21 (MKLKQIASALMMLGISPLALA) are cleaved as a signal peptide. POTRA domains are found at residues 23–90 (FTIQ…VIER), 91–171 (PTIG…IDEG), 174–262 (AKIT…VHEG), 265–344 (FRWG…IEPG), and 347–421 (IYVN…LTER).

The protein belongs to the BamA family. Part of the Bam complex.

It localises to the cell outer membrane. In terms of biological role, part of the outer membrane protein assembly complex, which is involved in assembly and insertion of beta-barrel proteins into the outer membrane. This chain is Outer membrane protein assembly factor BamA, found in Neisseria meningitidis serogroup B (strain ATCC BAA-335 / MC58).